Consider the following 155-residue polypeptide: Pathogenesis-related protein 2 (155 aa).

The protein belongs to the BetVI family.

The chain is Pathogenesis-related protein 2 from Phaseolus vulgaris (Kidney bean).